Here is a 240-residue protein sequence, read N- to C-terminus: DNA repair protein RecO (240 aa).

The protein belongs to the RecO family.

Involved in DNA repair and RecF pathway recombination. The sequence is that of DNA repair protein RecO from Pseudoalteromonas atlantica (strain T6c / ATCC BAA-1087).